Here is a 539-residue protein sequence, read N- to C-terminus: Eukaryotic translation initiation factor 3 subunit L (539 aa).

Residues 306-514 (TFSDILLYIQ…IHIADTKVSH (209 aa)) form the PCI domain.

The protein belongs to the eIF-3 subunit L family. As to quaternary structure, component of the eukaryotic translation initiation factor 3 (eIF-3) complex. The eIF-3 complex interacts with pix.

It localises to the cytoplasm. In terms of biological role, component of the eukaryotic translation initiation factor 3 (eIF-3) complex, which is involved in protein synthesis of a specialized repertoire of mRNAs and, together with other initiation factors, stimulates binding of mRNA and methionyl-tRNAi to the 40S ribosome. The eIF-3 complex specifically targets and initiates translation of a subset of mRNAs involved in cell proliferation. The protein is Eukaryotic translation initiation factor 3 subunit L of Drosophila melanogaster (Fruit fly).